A 174-amino-acid polypeptide reads, in one-letter code: Adipose-secreted signaling protein (174 aa).

Alanine 2 is modified (N-acetylalanine). Position 147 is a phosphothreonine (threonine 147).

This sequence belongs to the ADISSP family.

It localises to the secreted. Functionally, adipocyte-secreted protein (adipokine) that acts as a key regulator for white adipose tissue (WAT) thermogenesis and glucose homeostasis at least in part through activation of protein kinase A (PKA). This chain is Adipose-secreted signaling protein, found in Homo sapiens (Human).